The following is a 310-amino-acid chain: Pantothenate kinase (310 aa).

Gly95 to Ser102 is an ATP binding site.

Belongs to the prokaryotic pantothenate kinase family.

The protein localises to the cytoplasm. The catalysed reaction is (R)-pantothenate + ATP = (R)-4'-phosphopantothenate + ADP + H(+). It functions in the pathway cofactor biosynthesis; coenzyme A biosynthesis; CoA from (R)-pantothenate: step 1/5. The polypeptide is Pantothenate kinase (Rhodococcus jostii (strain RHA1)).